The sequence spans 98 residues: DNA-binding protein Fis (98 aa).

A DNA-binding region (H-T-H motif) is located at residues Q74–K93.

This sequence belongs to the transcriptional regulatory Fis family. Homodimer.

Functionally, activates ribosomal RNA transcription. Plays a direct role in upstream activation of rRNA promoters. This Aliivibrio fischeri (strain ATCC 700601 / ES114) (Vibrio fischeri) protein is DNA-binding protein Fis.